We begin with the raw amino-acid sequence, 570 residues long: PTS system lactose-specific EIICB component (570 aa).

One can recognise a PTS EIIC type-3 domain in the interval 9–410; sequence IEKGKPFFEK…VVDIIIYYPF (402 aa). Transmembrane regions (helical) follow at residues 31–51, 65–85, 104–124, 133–153, 178–198, 223–243, 283–303, 340–360, and 382–402; these read GFIS…IAYV, AILM…VAGT, INFI…ASDP, AFMG…TVIV, FKDL…DLVI, GWIG…VGIH, MFIV…MFMW, VFFI…KLFV, and IIMG…LIVV. A PTS EIIB type-3 domain is found at 467–570; sequence QTNVLVLCAG…LDFVQQQFEN (104 aa). The Phosphocysteine intermediate; for EIIB activity role is filled by Cys-474. Position 474 is a phosphocysteine; by EIIA (Cys-474).

The protein resides in the cell membrane. It carries out the reaction lactose(out) + N(pros)-phospho-L-histidyl-[protein] = lactose 6-phosphate(in) + L-histidyl-[protein]. In terms of biological role, the phosphoenolpyruvate-dependent sugar phosphotransferase system (sugar PTS), a major carbohydrate active transport system, catalyzes the phosphorylation of incoming sugar substrates concomitantly with their translocation across the cell membrane. The enzyme II LacEF PTS system is involved in lactose transport. In Staphylococcus aureus (strain N315), this protein is PTS system lactose-specific EIICB component.